A 96-amino-acid chain; its full sequence is Co-chaperonin GroES (96 aa).

Belongs to the GroES chaperonin family. As to quaternary structure, heptamer of 7 subunits arranged in a ring. Interacts with the chaperonin GroEL.

Its subcellular location is the cytoplasm. Functionally, together with the chaperonin GroEL, plays an essential role in assisting protein folding. The GroEL-GroES system forms a nano-cage that allows encapsulation of the non-native substrate proteins and provides a physical environment optimized to promote and accelerate protein folding. GroES binds to the apical surface of the GroEL ring, thereby capping the opening of the GroEL channel. In Wolbachia pipientis wMel, this protein is Co-chaperonin GroES.